A 307-amino-acid chain; its full sequence is Mitochondrial brown fat uncoupling protein 1 (307 aa).

Topologically, residues 1-10 (MVSLTTSEVH) are mitochondrial intermembrane. A helical transmembrane segment spans residues 11–32 (PTMGVKTFSAGISACLADIITF). Solcar repeat units lie at residues 11 to 102 (PTMG…VQEY), 111 to 201 (PTLG…MKGA), and 210 to 295 (DDVP…LKKE). Residues 33-73 (PLDTAKVRLQIQGEGQTSSTIRYKGVLGTITTLAKTEGWPK) lie on the Mitochondrial matrix side of the membrane. Residue lysine 56 coordinates fatty acid 16:0. A helical transmembrane segment spans residues 74–96 (LYSGLPAGIQRQISFASLRIGLY). The Mitochondrial intermembrane portion of the chain corresponds to 97-116 (DTVQEYFSSGKETPPTLGNR). Residues 117-133 (ISAGLMTGGVAVFIGQP) form a helical membrane-spanning segment. The Mitochondrial matrix portion of the chain corresponds to 134 to 178 (TEVVKVRLQAQSHLHGIKPRYTGTYNAYRIIATTESFSTLWKGTT). Residues 179–195 (PNLMRNVIINRTELVTY) form a helical membrane-spanning segment. The Mitochondrial intermembrane segment spans residues 196–212 (DLMKGALVNNQILADDV). Residues 213-232 (PCHLLSALVAGFCTTFLASP) traverse the membrane as a helical segment. Residues 233 to 266 (ADVVKTRFINSLPGQYPSVPSCAMTMLTKEGPTA) lie on the Mitochondrial matrix side of the membrane. Cysteine 254 is modified (cysteine sulfenic acid (-SOH)). Residues 267 to 289 (FFKGFVPSFLRLASWNVIMFVCF) form a helical membrane-spanning segment. Lysine 269 lines the fatty acid 16:0 pocket. Residues 290–307 (EQLKKELMKSRQTMDCTT) are Mitochondrial intermembrane-facing.

The protein belongs to the mitochondrial carrier (TC 2.A.29) family. As to quaternary structure, most probably functions as a monomer. Binds one purine nucleotide per monomer. However, has also been suggested to function as a homodimer or a homotetramer. Tightly associates with cardiolipin in the mitochondrion inner membrane; may stabilize and regulate its activity. In terms of processing, may undergo sulfenylation upon cold exposure. May increase the sensitivity of UCP1 thermogenic function to the activation by noradrenaline probably through structural effects. May undergo ubiquitin-mediated proteasomal degradation.

It localises to the mitochondrion inner membrane. It catalyses the reaction H(+)(in) = H(+)(out). Has no constitutive proton transporter activity and has to be activated by long-chain fatty acids/LCFAs. Inhibited by purine nucleotides. Both purine nucleotides and LCFAs bind the cytosolic side of the transporter and directly compete to activate or inhibit it. Activated by noradrenaline and reactive oxygen species. Despite lacking canonical translational encoding for selenocysteine, a small pool of the protein has been observed to selectively incorporate selenocysteine at 'Cys-254'. Selenocysteine-modified protein is highly sensitive to redox modification and may constitute a pool of protein highly sensitive to activation by elevated levels of reactive oxygen species (ROS). Mitochondrial protein responsible for thermogenic respiration, a specialized capacity of brown adipose tissue and beige fat that participates in non-shivering adaptive thermogenesis to temperature and diet variations and more generally to the regulation of energy balance. Functions as a long-chain fatty acid/LCFA and proton symporter, simultaneously transporting one LCFA and one proton through the inner mitochondrial membrane. However, LCFAs remaining associated with the transporter via their hydrophobic tails, it results in an apparent transport of protons activated by LCFAs. Thereby, dissipates the mitochondrial proton gradient and converts the energy of substrate oxydation into heat instead of ATP. Regulates the production of reactive oxygen species/ROS by mitochondria. This Dicrostonyx groenlandicus (Northern collared lemming) protein is Mitochondrial brown fat uncoupling protein 1.